We begin with the raw amino-acid sequence, 65 residues long: uncharacterized protein (65 aa).

Cys-9 serves as the catalytic Nucleophile. Residue Arg-15 is part of the active site.

This sequence belongs to the low molecular weight phosphotyrosine protein phosphatase family.

This is an uncharacterized protein from Synechococcus sp. (strain WH8020).